Reading from the N-terminus, the 211-residue chain is Urease accessory protein UreF (211 aa).

The protein belongs to the UreF family. UreD, UreF and UreG form a complex that acts as a GTP-hydrolysis-dependent molecular chaperone, activating the urease apoprotein by helping to assemble the nickel containing metallocenter of UreC. The UreE protein probably delivers the nickel.

It localises to the cytoplasm. Its function is as follows. Required for maturation of urease via the functional incorporation of the urease nickel metallocenter. This chain is Urease accessory protein UreF, found in Mycobacterium sp. (strain JLS).